A 354-amino-acid chain; its full sequence is Type II restriction enzyme BanI (354 aa).

Homodimer.

The catalysed reaction is Endonucleolytic cleavage of DNA to give specific double-stranded fragments with terminal 5'-phosphates.. A P subtype restriction enzyme that recognizes the double-stranded sequence 5'-GGYRCC-3' and cleaves after G-1. In Aneurinibacillus aneurinilyticus (Bacillus aneurinolyticus), this protein is Type II restriction enzyme BanI (banIR).